Here is a 284-residue protein sequence, read N- to C-terminus: MSLVVFTALVGLLVAPVTVHPMIALTGILFIALGAGASGALNMWSHEDIDRVMKRTRNRPVPSGTVAPGEALGIGLALSGIAVVMLGLATNLFAAGLLAFTIFFYAVVYSMWLKRTTPQNIVIGGAAGAFPPMIGWAVATGGVSVESLFMFALIFMWTPPHFWSLALFMKSDYSDAGVPMLTVTHGRRVTRAHVLVYSLLLAPLAVAGAFTGTGGPLYLATALALNGWLLVGAVRTWRRDEAQAEADRYRVEKAFFRFSLYYLFLHFGAILAEAALKPYGLGGW.

9 helical membrane-spanning segments follow: residues 2–19 (SLVVFTALVGLLVAPVTV), 23–45 (IALTGILFIALGAGASGALNMWS), 69–89 (GEALGIGLALSGIAVVMLGLA), 92–112 (LFAAGLLAFTIFFYAVVYSMW), 121–141 (IVIGGAAGAFPPMIGWAVATG), 148–168 (LFMFALIFMWTPPHFWSLALF), 194–214 (VLVYSLLLAPLAVAGAFTGTG), 217–237 (LYLATALALNGWLLVGAVRTW), and 263–283 (LFLHFGAILAEAALKPYGLGG).

It belongs to the UbiA prenyltransferase family. Protoheme IX farnesyltransferase subfamily. In terms of assembly, interacts with CtaA.

It is found in the cell inner membrane. It carries out the reaction heme b + (2E,6E)-farnesyl diphosphate + H2O = Fe(II)-heme o + diphosphate. Its pathway is porphyrin-containing compound metabolism; heme O biosynthesis; heme O from protoheme: step 1/1. Converts heme B (protoheme IX) to heme O by substitution of the vinyl group on carbon 2 of heme B porphyrin ring with a hydroxyethyl farnesyl side group. In Cereibacter sphaeroides (Rhodobacter sphaeroides), this protein is Protoheme IX farnesyltransferase.